A 923-amino-acid chain; its full sequence is Protein dct-6 (923 aa).

Residues 312-347 (DMNDQIEQMISLLVDELSELEKLEQLCKEVERTGNQ) are a coiled coil.

In terms of biological role, may have a role in tumor suppression. In Caenorhabditis elegans, this protein is Protein dct-6 (dct-6).